A 125-amino-acid chain; its full sequence is Histone H2A (125 aa).

The span at 1-18 shows a compositional bias: basic residues; the sequence is MSGRGKGGKAKGKSKSRS. The tract at residues 1-23 is disordered; that stretch reads MSGRGKGGKAKGKSKSRSSRAGL. At Ser2 the chain carries N-acetylserine. Ser2 is subject to Phosphoserine. Position 104 is an N5-methylglutamine (Gln104).

The protein belongs to the histone H2A family. In terms of assembly, the nucleosome is a histone octamer containing two molecules each of H2A, H2B, H3 and H4 assembled in one H3-H4 heterotetramer and two H2A-H2B heterodimers. The octamer wraps approximately 147 bp of DNA.

The protein resides in the nucleus. It is found in the chromosome. Functionally, core component of nucleosome. Nucleosomes wrap and compact DNA into chromatin, limiting DNA accessibility to the cellular machineries which require DNA as a template. Histones thereby play a central role in transcription regulation, DNA repair, DNA replication and chromosomal stability. DNA accessibility is regulated via a complex set of post-translational modifications of histones, also called histone code, and nucleosome remodeling. This is Histone H2A from Urechis caupo (Innkeeper worm).